Here is a 155-residue protein sequence, read N- to C-terminus: SsrA-binding protein (155 aa).

It belongs to the SmpB family.

The protein resides in the cytoplasm. Functionally, required for rescue of stalled ribosomes mediated by trans-translation. Binds to transfer-messenger RNA (tmRNA), required for stable association of tmRNA with ribosomes. tmRNA and SmpB together mimic tRNA shape, replacing the anticodon stem-loop with SmpB. tmRNA is encoded by the ssrA gene; the 2 termini fold to resemble tRNA(Ala) and it encodes a 'tag peptide', a short internal open reading frame. During trans-translation Ala-aminoacylated tmRNA acts like a tRNA, entering the A-site of stalled ribosomes, displacing the stalled mRNA. The ribosome then switches to translate the ORF on the tmRNA; the nascent peptide is terminated with the 'tag peptide' encoded by the tmRNA and targeted for degradation. The ribosome is freed to recommence translation, which seems to be the essential function of trans-translation. In Streptococcus sanguinis (strain SK36), this protein is SsrA-binding protein.